The primary structure comprises 441 residues: tRNA-2-methylthio-N(6)-dimethylallyladenosine synthase (441 aa).

The region spanning 5-121 (KKLYLETFGC…LQGMVAAAEE (117 aa)) is the MTTase N-terminal domain. Residues C14, C50, C84, C159, C163, and C166 each contribute to the [4Fe-4S] cluster site. Residues 145–375 (AEGGVTRFVT…QAAQKKTTLA (231 aa)) enclose the Radical SAM core domain. Positions 378-440 (RSLEGTVQKV…QTLLKGEIVH (63 aa)) constitute a TRAM domain.

Belongs to the methylthiotransferase family. MiaB subfamily. Monomer. The cofactor is [4Fe-4S] cluster.

It localises to the cytoplasm. The catalysed reaction is N(6)-dimethylallyladenosine(37) in tRNA + (sulfur carrier)-SH + AH2 + 2 S-adenosyl-L-methionine = 2-methylsulfanyl-N(6)-dimethylallyladenosine(37) in tRNA + (sulfur carrier)-H + 5'-deoxyadenosine + L-methionine + A + S-adenosyl-L-homocysteine + 2 H(+). In terms of biological role, catalyzes the methylthiolation of N6-(dimethylallyl)adenosine (i(6)A), leading to the formation of 2-methylthio-N6-(dimethylallyl)adenosine (ms(2)i(6)A) at position 37 in tRNAs that read codons beginning with uridine. The sequence is that of tRNA-2-methylthio-N(6)-dimethylallyladenosine synthase from Citrifermentans bemidjiense (strain ATCC BAA-1014 / DSM 16622 / JCM 12645 / Bem) (Geobacter bemidjiensis).